Here is an 820-residue protein sequence, read N- to C-terminus: Inhibitor of nuclear factor kappa-B kinase epsilon subunit homolog 1 (820 aa).

The Protein kinase domain maps to 21-299 (LFNDESIGKG…TDIFEFQPVT (279 aa)). ATP is bound by residues 27-35 (IGKGAYSEV) and lysine 49. Catalysis depends on aspartate 149, which acts as the Proton acceptor. The interval 758–798 (SPNKEQFPKPEQDSILESSIDEGSTSFESTPPSSPPDVGSN) is disordered.

The protein belongs to the protein kinase superfamily. Ser/Thr protein kinase family. In terms of assembly, interacts with allo-1 (via N-terminus); the interaction is direct. Expressed in oocytes.

It is found in the cytoplasm. The enzyme catalyses L-seryl-[protein] + ATP = O-phospho-L-seryl-[protein] + ADP + H(+). It carries out the reaction L-threonyl-[protein] + ATP = O-phospho-L-threonyl-[protein] + ADP + H(+). In terms of biological role, serine/threonine-protein kinase, which plays a role in regulating allophagy, an autophagic process in which paternal organelles, including mitochondria and membranous organelles, are degraded in embryos. Phosphorylates the allophagy receptor allo-1, which is required for allophagy. The chain is Inhibitor of nuclear factor kappa-B kinase epsilon subunit homolog 1 from Caenorhabditis elegans.